Here is a 159-residue protein sequence, read N- to C-terminus: Transcription elongation factor GreA (159 aa).

Belongs to the GreA/GreB family.

In terms of biological role, necessary for efficient RNA polymerase transcription elongation past template-encoded arresting sites. The arresting sites in DNA have the property of trapping a certain fraction of elongating RNA polymerases that pass through, resulting in locked ternary complexes. Cleavage of the nascent transcript by cleavage factors such as GreA or GreB allows the resumption of elongation from the new 3'terminus. GreA releases sequences of 2 to 3 nucleotides. In Buchnera aphidicola subsp. Baizongia pistaciae (strain Bp), this protein is Transcription elongation factor GreA.